The chain runs to 130 residues: Riboflavin kinase (130 aa).

Gly12–Ala17 provides a ligand contact to CDP. Mg(2+) contacts are provided by Thr39 and Asn41. Positions 90 and 98 each coordinate FMN. A CDP-binding site is contributed by Lys103–Arg106.

The protein belongs to the archaeal riboflavin kinase family. The cofactor is Mg(2+).

It carries out the reaction riboflavin + CTP = CDP + FMN + H(+). It participates in cofactor biosynthesis; FMN biosynthesis; FMN from riboflavin (CTP route): step 1/1. Catalyzes the CTP-dependent phosphorylation of riboflavin (vitamin B2) to form flavin mononucleotide (FMN). This is Riboflavin kinase from Staphylothermus marinus (strain ATCC 43588 / DSM 3639 / JCM 9404 / F1).